A 308-amino-acid polypeptide reads, in one-letter code: 15-cis-phytoene synthase (308 aa).

Belongs to the phytoene/squalene synthase family. It depends on ATP as a cofactor. Requires Mn(2+) as cofactor. The cofactor is Mg(2+).

It carries out the reaction 2 (2E,6E,10E)-geranylgeranyl diphosphate = 15-cis-phytoene + 2 diphosphate. It participates in carotenoid biosynthesis; phytoene biosynthesis. Functionally, involved in the biosynthesis of carotenoids. Catalyzes the condensation of two molecules of geranylgeranyl diphosphate (GGPP) to give prephytoene diphosphate (PPPP) and the subsequent rearrangement of the cyclopropylcarbinyl intermediate to yield 15-cis-phytoene. The chain is 15-cis-phytoene synthase (crtB) from Synechococcus elongatus (strain ATCC 33912 / PCC 7942 / FACHB-805) (Anacystis nidulans R2).